The chain runs to 92 residues: Small ribosomal subunit protein uS19c (92 aa).

This sequence belongs to the universal ribosomal protein uS19 family.

It localises to the plastid. Its subcellular location is the chloroplast. Functionally, protein S19 forms a complex with S13 that binds strongly to the 16S ribosomal RNA. This chain is Small ribosomal subunit protein uS19c, found in Pyropia yezoensis (Susabi-nori).